The chain runs to 292 residues: Pyridoxal 5'-phosphate synthase subunit PdxS (292 aa).

D-ribose 5-phosphate is bound at residue Asp-22. Residue Lys-79 is the Schiff-base intermediate with D-ribose 5-phosphate of the active site. Position 151 (Gly-151) interacts with D-ribose 5-phosphate. A D-glyceraldehyde 3-phosphate-binding site is contributed by Arg-163. Residues Gly-212 and 233–234 (GS) each bind D-ribose 5-phosphate.

Belongs to the PdxS/SNZ family. In terms of assembly, in the presence of PdxT, forms a dodecamer of heterodimers.

It catalyses the reaction aldehydo-D-ribose 5-phosphate + D-glyceraldehyde 3-phosphate + L-glutamine = pyridoxal 5'-phosphate + L-glutamate + phosphate + 3 H2O + H(+). It functions in the pathway cofactor biosynthesis; pyridoxal 5'-phosphate biosynthesis. Catalyzes the formation of pyridoxal 5'-phosphate from ribose 5-phosphate (RBP), glyceraldehyde 3-phosphate (G3P) and ammonia. The ammonia is provided by the PdxT subunit. Can also use ribulose 5-phosphate and dihydroxyacetone phosphate as substrates, resulting from enzyme-catalyzed isomerization of RBP and G3P, respectively. This is Pyridoxal 5'-phosphate synthase subunit PdxS from Ruminiclostridium cellulolyticum (strain ATCC 35319 / DSM 5812 / JCM 6584 / H10) (Clostridium cellulolyticum).